The primary structure comprises 420 residues: Histidine--tRNA ligase (420 aa).

The protein belongs to the class-II aminoacyl-tRNA synthetase family. Homodimer.

Its subcellular location is the cytoplasm. It carries out the reaction tRNA(His) + L-histidine + ATP = L-histidyl-tRNA(His) + AMP + diphosphate + H(+). This Staphylococcus aureus (strain Mu3 / ATCC 700698) protein is Histidine--tRNA ligase.